The following is a 421-amino-acid chain: Synaptotagmin-1 (421 aa).

The Vesicular portion of the chain corresponds to 1–57 (MVSASHPEALAAPVTTVATLVPHNATEPASPGEGKEDAFSKLKQKFMNELHKIPLPP). N24 carries N-linked (GlcNAc...) asparagine glycosylation. The helical transmembrane segment at 58-79 (WALIAIAIVAVLLVVTCCFCVC) threads the bilayer. Residues C74, C75, C77, C79, and C82 are each lipidated (S-palmitoyl cysteine). Residues 80 to 421 (KKCLFKKKNK…EVDAMLAVKK (342 aa)) lie on the Cytoplasmic side of the membrane. Residues 112-141 (TMKDQALKDDDAETGLTDGEEKEEPKEEEK) are disordered. The span at 121–133 (DDAETGLTDGEEK) shows a compositional bias: acidic residues. Phosphothreonine is present on T128. The segment at 135–381 (EPKEEEKLGK…AIGKVFVGYN (247 aa)) is phospholipid binding. In terms of domain architecture, C2 1 spans 141–260 (KLGKLQYSLD…DFGHVTEEWR (120 aa)). Ca(2+) contacts are provided by L171, D172, and D178. Y229 is subject to Phosphotyrosine. D230, F231, D232, S235, K236, and D238 together coordinate Ca(2+). A Phosphoserine modification is found at S264. Residues 272–405 (KLGDICFSLR…NPRRPIAQWH (134 aa)) form the C2 2 domain. 2 residues coordinate Ca(2+): D303 and D309. 2 positions are modified to phosphoserine: S342 and S344. Residues D363, D365, and D371 each coordinate Ca(2+).

This sequence belongs to the synaptotagmin family. Homotetramer. Heterodimer; heterodimerizes with SYT2 in presence of calcium. Interacts with SCAMP5. Interacts with STON2. Forms a complex with SV2B, syntaxin 1 and SNAP25. Interacts with SV2A, SV2B and SV2C. Interacts with RIMS1. Interacts with PRRT2. Interacts with DNAJC5 in a phosphorylation-dependent manner. Interacts (via N-terminus) with RAB3A. Interacts with SYT12. Interacts with calmodulin. Interacts with DNM1 (via C-terminal proline-rich domain (PRD)); this interaction facilitates vesicle fission during clathrin-mediated endocytosis (CME). As to quaternary structure, (Microbial infection) Interacts with C.botulinum neurotoxin type B (BoNT/B, botB). Has lower affinity for BoNT/B than Syt2; mutating its residues to match those in Syt2 increases its affinity. In terms of assembly, (Microbial infection) Interacts with C.botulinum neurotoxin type G (BoNT/G, botG). Requires Ca(2+) as cofactor. Post-translationally, glycosylated. As to expression, expressed in the brain (at protein level). Predominantly expressed in rostral, phylogenetically younger brain regions, and in some endocrine tissues.

Its subcellular location is the cytoplasmic vesicle. It is found in the secretory vesicle membrane. It localises to the secretory vesicle. The protein localises to the synaptic vesicle membrane. The protein resides in the chromaffin granule membrane. Its subcellular location is the cytoplasm. Its function is as follows. Calcium sensor that participates in triggering neurotransmitter release at the synapse. May have a regulatory role in the membrane interactions during trafficking of synaptic vesicles at the active zone of the synapse. It binds acidic phospholipids with a specificity that requires the presence of both an acidic head group and a diacyl backbone. A Ca(2+)-dependent interaction between synaptotagmin and putative receptors for activated protein kinase C has also been reported. It can bind to at least three additional proteins in a Ca(2+)-independent manner; these are neurexins, syntaxin and AP2. Plays a role in dendrite formation by melanocytes. Functionally, (Microbial infection) Receptor for C.botulinum neurotoxin type B (BoNT/B, botB); interaction is improved in the presence of gangliosides. BoNT/B toxin binds to the membrane proximal vesicular domain of Syt1 (residues 32-51). In terms of biological role, (Microbial infection) Receptor for C.botulinum neurotoxin type G (BoNT/G, botG); unlike the case with BoNT/B, interaction is not improved in the presence of gangliosides. BoNT/G toxin binds to the vesicular domain of Syt1 (residues 32-53). In Rattus norvegicus (Rat), this protein is Synaptotagmin-1.